The sequence spans 83 residues: Small ribosomal subunit protein uS17 (83 aa).

It belongs to the universal ribosomal protein uS17 family. In terms of assembly, part of the 30S ribosomal subunit.

Functionally, one of the primary rRNA binding proteins, it binds specifically to the 5'-end of 16S ribosomal RNA. The sequence is that of Small ribosomal subunit protein uS17 from Acaryochloris marina (strain MBIC 11017).